The following is a 199-amino-acid chain: Hematopoietic prostaglandin D synthase (199 aa).

Residues 2-79 (PNYKLTYFNL…YLARESGLAG (78 aa)) form the GST N-terminal domain. Residues tyrosine 8, arginine 14, tryptophan 39, 49 to 51 (GKV), and 63 to 64 (QS) each bind glutathione. The region spanning 81–199 (TPVEQALADA…WIQKRPKTAI (119 aa)) is the GST C-terminal domain.

The protein belongs to the GST superfamily. Sigma family. Glutathione serves as cofactor. As to expression, highly expressed in liver, kidney, small intestine and colon, moderately in pancreas, bone marrow, lung and ovary, and expressed at low levels in spleen, thymus, heart and brain. Not detected in oviduct or skin (at protein level). Expressed in liver.

The protein resides in the cytoplasm. It carries out the reaction prostaglandin H2 = prostaglandin D2. The enzyme catalyses RX + glutathione = an S-substituted glutathione + a halide anion + H(+). It catalyses the reaction 2-glyceryl-prostaglandin H2 = 2-glyceryl-prostaglandin D2. Bifunctional enzyme which catalyzes both the conversion of PGH2 to PGD2, a prostaglandin involved in smooth muscle contraction/relaxation and a potent inhibitor of platelet aggregation, and the conjugation of glutathione with a wide range of aryl halides, organic isothiocyanates and alpha,beta-unsaturated carbonyls. Also exhibits low glutathione-peroxidase activity towards cumene hydroperoxide and t-butyl hydroperoxide. The protein is Hematopoietic prostaglandin D synthase (HPGDS) of Gallus gallus (Chicken).